The following is a 210-amino-acid chain: Small ribosomal subunit protein uS3 (210 aa).

One can recognise a KH type-2 domain in the interval 17–86 (IDEFLEKELR…NPQIDVQEIK (70 aa)).

It belongs to the universal ribosomal protein uS3 family. In terms of assembly, part of the 30S ribosomal subunit.

Functionally, binds the lower part of the 30S subunit head. The sequence is that of Small ribosomal subunit protein uS3 from Pyrococcus horikoshii (strain ATCC 700860 / DSM 12428 / JCM 9974 / NBRC 100139 / OT-3).